A 209-amino-acid chain; its full sequence is Thymidylate kinase (209 aa).

An ATP-binding site is contributed by 13-20; the sequence is GLEGAGKS.

Belongs to the thymidylate kinase family.

It catalyses the reaction dTMP + ATP = dTDP + ADP. Phosphorylation of dTMP to form dTDP in both de novo and salvage pathways of dTTP synthesis. The protein is Thymidylate kinase of Shewanella sp. (strain ANA-3).